The primary structure comprises 328 residues: Coiled-coil domain-containing protein 54 (328 aa).

Residues 93–148 (KIQEKTDFFQKQMQVLETKMNVNENKQCATAEDIFSVKEDVDALKKKVTELGNQNS) adopt a coiled-coil conformation. Thr182 is subject to Phosphothreonine.

The protein is Coiled-coil domain-containing protein 54 (CCDC54) of Bos taurus (Bovine).